We begin with the raw amino-acid sequence, 151 residues long: UPF0098 protein MTH_273 (151 aa).

This sequence belongs to the UPF0098 family.

This chain is UPF0098 protein MTH_273, found in Methanothermobacter thermautotrophicus (strain ATCC 29096 / DSM 1053 / JCM 10044 / NBRC 100330 / Delta H) (Methanobacterium thermoautotrophicum).